The primary structure comprises 162 residues: Urease accessory protein UreE 1 (162 aa).

A disordered region spans residues 143 to 162 (SGGHQHHHGHDHDHHHPDHE). Residues 152–162 (HDHDHHHPDHE) show a composition bias toward basic and acidic residues.

Belongs to the UreE family.

The protein localises to the cytoplasm. Involved in urease metallocenter assembly. Binds nickel. Probably functions as a nickel donor during metallocenter assembly. This Brucella suis biovar 1 (strain 1330) protein is Urease accessory protein UreE 1.